The chain runs to 237 residues: Phosphoserine phosphatase (237 aa).

Aspartate 39 functions as the Nucleophile in the catalytic mechanism. Mg(2+) is bound by residues aspartate 39 and glutamate 41. Residue glutamate 41 is the Proton donor of the active site. Substrate contacts are provided by residues glutamate 47, arginine 78, 122–123, and lysine 165; that span reads SD. Aspartate 184 is a Mg(2+) binding site. Residue asparagine 187 coordinates substrate.

It belongs to the thrH family. Requires Mg(2+) as cofactor.

The enzyme catalyses O-phospho-L-serine + H2O = L-serine + phosphate. The catalysed reaction is O-phospho-D-serine + H2O = D-serine + phosphate. The protein operates within amino-acid biosynthesis; L-serine biosynthesis; L-serine from 3-phospho-D-glycerate: step 3/3. In terms of biological role, phosphoserine phosphatase that mediates dephosphorylation of phosphoserine in the serine biosynthesis pathway. Also able to dephosphorylate phospho-threonine. The polypeptide is Phosphoserine phosphatase (Pseudomonas syringae pv. tomato (strain ATCC BAA-871 / DC3000)).